A 154-amino-acid chain; its full sequence is Putative pre-16S rRNA nuclease (154 aa).

This sequence belongs to the YqgF nuclease family.

The protein localises to the cytoplasm. In terms of biological role, could be a nuclease involved in processing of the 5'-end of pre-16S rRNA. This Rickettsia canadensis (strain McKiel) protein is Putative pre-16S rRNA nuclease.